We begin with the raw amino-acid sequence, 361 residues long: tRNA/tmRNA (uracil-C(5))-methyltransferase (361 aa).

Residues Q185, Y213, N218, E234, and D294 each coordinate S-adenosyl-L-methionine. The active-site Nucleophile is the C319. E353 acts as the Proton acceptor in catalysis.

Belongs to the class I-like SAM-binding methyltransferase superfamily. RNA M5U methyltransferase family. TrmA subfamily.

The catalysed reaction is uridine(54) in tRNA + S-adenosyl-L-methionine = 5-methyluridine(54) in tRNA + S-adenosyl-L-homocysteine + H(+). The enzyme catalyses uridine(341) in tmRNA + S-adenosyl-L-methionine = 5-methyluridine(341) in tmRNA + S-adenosyl-L-homocysteine + H(+). Functionally, dual-specificity methyltransferase that catalyzes the formation of 5-methyluridine at position 54 (m5U54) in all tRNAs, and that of position 341 (m5U341) in tmRNA (transfer-mRNA). The protein is tRNA/tmRNA (uracil-C(5))-methyltransferase of Pseudomonas putida (strain W619).